The primary structure comprises 159 residues: Small ribosomal subunit protein bS6 (159 aa).

Residues 93-151 (VDEHEEGPSAMMRKADRDRERDDRGPREGGFRGDREGRGDREGGGFRGDRGPRRPREDA) are compositionally biased toward basic and acidic residues. The interval 93–159 (VDEHEEGPSA…DADTAAASEE (67 aa)) is disordered.

Belongs to the bacterial ribosomal protein bS6 family.

In terms of biological role, binds together with bS18 to 16S ribosomal RNA. The protein is Small ribosomal subunit protein bS6 of Rhodopseudomonas palustris (strain HaA2).